Reading from the N-terminus, the 103-residue chain is ESAT-6-like protein EsxF (103 aa).

This sequence belongs to the WXG100 family. CFP-10 subfamily.

The protein resides in the secreted. The polypeptide is ESAT-6-like protein EsxF (Mycobacterium tuberculosis (strain CDC 1551 / Oshkosh)).